Consider the following 276-residue polypeptide: Putative metal-binding protein CT_415 (276 aa).

The N-terminal stretch at 1–18 (MRLLFLLLFSLGITCSYG) is a signal peptide. A divalent metal cation-binding residues include His-59, His-121, His-185, and Asp-256.

This sequence belongs to the bacterial solute-binding protein 9 family.

It is found in the periplasm. Functionally, part of an ATP-binding cassette (ABC) transport system involved in metal import. Binds a metal with high affinity and specificity and delivers it to the membrane permease for translocation into the cytoplasm. This chain is Putative metal-binding protein CT_415, found in Chlamydia trachomatis serovar D (strain ATCC VR-885 / DSM 19411 / UW-3/Cx).